A 239-amino-acid polypeptide reads, in one-letter code: tRNA1(Val) (adenine(37)-N6)-methyltransferase (239 aa).

Belongs to the methyltransferase superfamily. tRNA (adenine-N(6)-)-methyltransferase family.

The protein resides in the cytoplasm. It catalyses the reaction adenosine(37) in tRNA1(Val) + S-adenosyl-L-methionine = N(6)-methyladenosine(37) in tRNA1(Val) + S-adenosyl-L-homocysteine + H(+). Functionally, specifically methylates the adenine in position 37 of tRNA(1)(Val) (anticodon cmo5UAC). The polypeptide is tRNA1(Val) (adenine(37)-N6)-methyltransferase (Vibrio parahaemolyticus serotype O3:K6 (strain RIMD 2210633)).